Reading from the N-terminus, the 103-residue chain is ATP-dependent Clp protease adapter protein ClpS (103 aa).

The protein belongs to the ClpS family. In terms of assembly, binds to the N-terminal domain of the chaperone ClpA.

In terms of biological role, involved in the modulation of the specificity of the ClpAP-mediated ATP-dependent protein degradation. The chain is ATP-dependent Clp protease adapter protein ClpS from Nitrosomonas eutropha (strain DSM 101675 / C91 / Nm57).